The following is a 511-amino-acid chain: Transcription factor bHLH28 (511 aa).

The bHLH domain maps to 339–388 (DKPLNHVEAERMRREKLNHRFYALRAVVPNVSKMDKTSLLEDAVCYINEL).

As to quaternary structure, homodimer.

Its subcellular location is the nucleus. In Arabidopsis thaliana (Mouse-ear cress), this protein is Transcription factor bHLH28 (BHLH28).